The following is an 834-amino-acid chain: Copper-exporting P-type ATPase (834 aa).

2 consecutive HMA domains span residues 3–64 (QTID…YDAS) and 99–162 (DSQQ…YGAE). 4 residues coordinate Cu(+): Cys14, Cys17, Cys110, and Cys113. The next 6 helical transmembrane spans lie at 187 to 207 (WQAI…MIGD), 218 to 238 (LWLV…GHFY), 254 to 274 (TLVA…NLWP), 284 to 304 (LYYE…MLEA), 438 to 458 (AVFV…WYFF), and 464 to 484 (IVYT…CALG). The active-site 4-aspartylphosphate intermediate is the Asp523. Residues Asp720 and Asp724 each coordinate Mg(2+). A run of 2 helical transmembrane segments spans residues 779 to 799 (LGAF…LWPF) and 801 to 821 (GTLL…ITVV).

This sequence belongs to the cation transport ATPase (P-type) (TC 3.A.3) family. Type IB subfamily.

It is found in the cell inner membrane. The protein resides in the cytoplasm. It catalyses the reaction Cu(+)(in) + ATP + H2O = Cu(+)(out) + ADP + phosphate + H(+). Involved in Cu(+) export. Functionally, probably also encodes a cytoplasmic copper chaperone CopA(Z) that is produced by programmed ribosomal frameshifting. This is Copper-exporting P-type ATPase (copA) from Escherichia coli O157:H7.